Consider the following 173-residue polypeptide: Shikimate kinase (173 aa).

Residue G16–T21 participates in ATP binding. T20 lines the Mg(2+) pocket. D38, R62, and G83 together coordinate substrate. R120 is an ATP binding site. Substrate is bound at residue R139. Residue R156 coordinates ATP.

This sequence belongs to the shikimate kinase family. As to quaternary structure, monomer. It depends on Mg(2+) as a cofactor.

It is found in the cytoplasm. It carries out the reaction shikimate + ATP = 3-phosphoshikimate + ADP + H(+). It functions in the pathway metabolic intermediate biosynthesis; chorismate biosynthesis; chorismate from D-erythrose 4-phosphate and phosphoenolpyruvate: step 5/7. Catalyzes the specific phosphorylation of the 3-hydroxyl group of shikimic acid using ATP as a cosubstrate. In Corynebacterium diphtheriae (strain ATCC 700971 / NCTC 13129 / Biotype gravis), this protein is Shikimate kinase.